A 2095-amino-acid chain; its full sequence is Oxygen-regulated protein 1 (2095 aa).

Doublecortin domains lie at 35–117 (KRIS…VDLD) and 157–236 (RRLV…GNYD). 5 disordered regions span residues 358–379 (GLSN…DYGP), 643–688 (ENRK…GKIP), 863–887 (GAEV…PDFP), 1400–1430 (NKKK…SSER), and 1572–1595 (SGYP…EPTR). Positions 1405 to 1419 (ISSDKEESRTSEEPR) are enriched in basic and acidic residues. Polar residues predominate over residues 1420–1430 (SITNSMTSSER). A compositionally biased stretch (basic and acidic residues) spans 1583–1595 (HNDDSGQEKEPTR).

Interacts (via the doublecortin domains) with microtubules. Interacts with RP1L1. Interacts with MAK. Expressed in the cell bodies and inner segments of photoreceptors. Not found in liver, spleen, kidney, brain, thymus, muscle, heart, lung and testis.

It localises to the cytoplasm. It is found in the cytoskeleton. The protein localises to the cilium axoneme. Its subcellular location is the cell projection. The protein resides in the cilium. It localises to the photoreceptor outer segment. Its function is as follows. Microtubule-associated protein regulating the stability and length of the microtubule-based axoneme of photoreceptors. Required for the differentiation of photoreceptor cells, it plays a role in the organization of the outer segment of rod and cone photoreceptors ensuring the correct orientation and higher-order stacking of outer segment disks along the photoreceptor axoneme. The protein is Oxygen-regulated protein 1 (Rp1) of Mus musculus (Mouse).